A 420-amino-acid polypeptide reads, in one-letter code: MPNGSRCPDCGSSELVEDSHYSQSQLVCSDCGCVVTEGVLTTTFSDEGNFREVTYSRSTGENEQVSRCQQRDLRRVRDLCRILKLPLTFEDTAISYYQKAYQLSGIRAARLQKKEVLVGCCVLITCRQHNWPLTMGTICTLLYADLDLFSGTYMQMVKLLGLDVPSLCLADLVKSYCSSFKLFQASPSVPAKYVEDKDKMLSRTLLLVELADETWLVTGRHPLPIITAATFLAWQSLRPSDRLTCSLAQFCKLANVDLPYPAASRLQELLAVLLQMAGQLAWLQVLKLNKRSVVKHIGDLLQHRHMLVRTAFRDGTAEVETQQQQQQQQGQGQGQQDEVGDGPFDLPKRKRRASPTPLLPPCMLKPPKRTHTLPPESAVTGDEDISDSEIEQYLRTPQEVRDFERAQAASQAAMRVPNPP.

Residues 3 to 36 (NGSRCPDCGSSELVEDSHYSQSQLVCSDCGCVVT) form a TFIIB-type zinc finger. Zn(2+) is bound by residues Cys-7, Cys-10, Cys-28, and Cys-31. 2 tandem repeats follow at residues 72-157 (DLRR…MQMV) and 173-249 (VKSY…SLAQ). An interaction with target DNA region spans residues 108–114 (AARLQKK). A disordered region spans residues 316–387 (TAEVETQQQQ…AVTGDEDISD (72 aa)). Low complexity predominate over residues 322-336 (QQQQQQQQGQGQGQQ). Phosphoserine is present on Ser-354. The required for the formation of a ternary complex with DNA and TBP; not required for interaction with TBP in the absence of DNA stretch occupies residues 358-364 (LLPPCML). Cys-362 carries the post-translational modification Cysteine sulfenic acid (-SOH). Residues 366–420 (PPKRTHTLPPESAVTGDEDISDSEIEQYLRTPQEVRDFERAQAASQAAMRVPNPP) form a required for interaction with TBP and formation of a ternary complex with DNA and TBP region.

This sequence belongs to the TFIIB family. As to quaternary structure, component of TFIIIB complexes. The TFIIIB complex has two activities, alpha and beta. The TFIIIB-alpha activity complex is composed of TBP, BDP1, and a complex containing both BRF2 and at least four stably associated proteins; this complex inhibits the transcription by pol III via its phosphorylation by CK2; YY1 facilitates the TFIIIB-alpha complex formation. Interacts with TBP; this interaction promotes recruitment of BRF2 to TATA box-containing promoters. Interacts with TBP and the BURE sequence (GC-rich sequence downstream from the TATA box) to form a strong ternary complex which is joined by BDP1; this ternary complex stimulates pol III transcription. Forms a trimeric complex composed of TBP, BRF2 and mini-SNAPc complex (SNAP43, SNAP50, and the N-terminal third of SNAP190) on the promoter. Assembly of the TBP-BRF2 complex is stimulated by SNAP190. Interacts with MAF1 and SNAPC4. Post-translationally, in response to oxidative stress, Cys-362 is reversibly oxidized to cysteine sulfenic acid. Oxidation of Cys-362 impairs formation of a ternary complex with TBP and DNA and down-regulates expression of target genes in response to oxidative stress.

Its subcellular location is the nucleus. In terms of biological role, general activator of RNA polymerase III transcription. Factor exclusively required for RNA polymerase III transcription of genes with promoter elements upstream of the initiation sites. Contributes to the regulation of gene expression; functions as activator in the absence of oxidative stress. Down-regulates expression of target genes in response to oxidative stress. Overexpression protects cells against apoptosis in response to oxidative stress. This Mus musculus (Mouse) protein is Transcription factor IIIB 50 kDa subunit (Brf2).